Reading from the N-terminus, the 213-residue chain is Large ribosomal subunit protein uL1 (213 aa).

The protein belongs to the universal ribosomal protein uL1 family. In terms of assembly, part of the 50S ribosomal subunit.

In terms of biological role, binds directly to 23S rRNA. Probably involved in E site tRNA release. Protein L1 is also a translational repressor protein, it controls the translation of its operon by binding to its mRNA. The protein is Large ribosomal subunit protein uL1 of Methanococcus maripaludis (strain DSM 14266 / JCM 13030 / NBRC 101832 / S2 / LL).